The chain runs to 61 residues: Small ribosomal subunit protein uS14 (61 aa).

4 residues coordinate Zn(2+): Cys24, Cys27, Cys40, and Cys43.

It belongs to the universal ribosomal protein uS14 family. Zinc-binding uS14 subfamily. As to quaternary structure, part of the 30S ribosomal subunit. Contacts proteins S3 and S10. Zn(2+) serves as cofactor.

Binds 16S rRNA, required for the assembly of 30S particles and may also be responsible for determining the conformation of the 16S rRNA at the A site. The polypeptide is Small ribosomal subunit protein uS14 (Caldanaerobacter subterraneus subsp. tengcongensis (strain DSM 15242 / JCM 11007 / NBRC 100824 / MB4) (Thermoanaerobacter tengcongensis)).